We begin with the raw amino-acid sequence, 124 residues long: Small ribosomal subunit protein uS13 (124 aa).

The disordered stretch occupies residues 99 to 124; sequence RGQRTRTNARTRKGPRKTVGVMRKKS. The segment covering 101–124 has biased composition (basic residues); sequence QRTRTNARTRKGPRKTVGVMRKKS.

This sequence belongs to the universal ribosomal protein uS13 family. Part of the 30S ribosomal subunit. Forms a loose heterodimer with protein S19. Forms two bridges to the 50S subunit in the 70S ribosome.

Functionally, located at the top of the head of the 30S subunit, it contacts several helices of the 16S rRNA. In the 70S ribosome it contacts the 23S rRNA (bridge B1a) and protein L5 of the 50S subunit (bridge B1b), connecting the 2 subunits; these bridges are implicated in subunit movement. Contacts the tRNAs in the A and P-sites. The chain is Small ribosomal subunit protein uS13 from Caldicellulosiruptor saccharolyticus (strain ATCC 43494 / DSM 8903 / Tp8T 6331).